The primary structure comprises 620 residues: uncharacterized protein (620 aa).

Belongs to the chlamydial CPn_0512/CT_425/TC_0708 family.

This is an uncharacterized protein from Chlamydia pneumoniae (Chlamydophila pneumoniae).